The sequence spans 202 residues: Holliday junction branch migration complex subunit RuvA (202 aa).

The tract at residues 1–64 (MIGYLKGQIL…YDGTVLYGFL (64 aa)) is domain I. The segment at 65-146 (TKEDKQLWAI…AVTIAGVPKI (82 aa)) is domain II. The tract at residues 147–155 (KIEGEAPFM) is flexible linker. The interval 155–202 (MSEVMMALTALGYSPMEARKAIDQLYKTGLANDSVENIIRAALRILKK) is domain III.

It belongs to the RuvA family. In terms of assembly, homotetramer. Forms an RuvA(8)-RuvB(12)-Holliday junction (HJ) complex. HJ DNA is sandwiched between 2 RuvA tetramers; dsDNA enters through RuvA and exits via RuvB. An RuvB hexamer assembles on each DNA strand where it exits the tetramer. Each RuvB hexamer is contacted by two RuvA subunits (via domain III) on 2 adjacent RuvB subunits; this complex drives branch migration. In the full resolvosome a probable DNA-RuvA(4)-RuvB(12)-RuvC(2) complex forms which resolves the HJ.

Its subcellular location is the cytoplasm. The RuvA-RuvB-RuvC complex processes Holliday junction (HJ) DNA during genetic recombination and DNA repair, while the RuvA-RuvB complex plays an important role in the rescue of blocked DNA replication forks via replication fork reversal (RFR). RuvA specifically binds to HJ cruciform DNA, conferring on it an open structure. The RuvB hexamer acts as an ATP-dependent pump, pulling dsDNA into and through the RuvAB complex. HJ branch migration allows RuvC to scan DNA until it finds its consensus sequence, where it cleaves and resolves the cruciform DNA. This chain is Holliday junction branch migration complex subunit RuvA, found in Elusimicrobium minutum (strain Pei191).